A 424-amino-acid polypeptide reads, in one-letter code: Serine--tRNA ligase (424 aa).

Residue 232–234 (TAE) coordinates L-serine. ATP is bound at residue 263-265 (RQE). Glu286 provides a ligand contact to L-serine. 350 to 353 (EIGS) provides a ligand contact to ATP. Ser386 is an L-serine binding site.

It belongs to the class-II aminoacyl-tRNA synthetase family. Type-1 seryl-tRNA synthetase subfamily. In terms of assembly, homodimer. The tRNA molecule binds across the dimer.

Its subcellular location is the cytoplasm. The enzyme catalyses tRNA(Ser) + L-serine + ATP = L-seryl-tRNA(Ser) + AMP + diphosphate + H(+). The catalysed reaction is tRNA(Sec) + L-serine + ATP = L-seryl-tRNA(Sec) + AMP + diphosphate + H(+). It functions in the pathway aminoacyl-tRNA biosynthesis; selenocysteinyl-tRNA(Sec) biosynthesis; L-seryl-tRNA(Sec) from L-serine and tRNA(Sec): step 1/1. Its function is as follows. Catalyzes the attachment of serine to tRNA(Ser). Is also able to aminoacylate tRNA(Sec) with serine, to form the misacylated tRNA L-seryl-tRNA(Sec), which will be further converted into selenocysteinyl-tRNA(Sec). This is Serine--tRNA ligase from Onion yellows phytoplasma (strain OY-M).